The following is a 203-amino-acid chain: Holliday junction branch migration complex subunit RuvA (203 aa).

The segment at Met1 to Leu63 is domain I. Residues Thr64–Lys142 are domain II. Residues Glu143–Asn149 form a flexible linker region. The tract at residues Ile150–Phe203 is domain III.

The protein belongs to the RuvA family. In terms of assembly, homotetramer. Forms an RuvA(8)-RuvB(12)-Holliday junction (HJ) complex. HJ DNA is sandwiched between 2 RuvA tetramers; dsDNA enters through RuvA and exits via RuvB. An RuvB hexamer assembles on each DNA strand where it exits the tetramer. Each RuvB hexamer is contacted by two RuvA subunits (via domain III) on 2 adjacent RuvB subunits; this complex drives branch migration. In the full resolvosome a probable DNA-RuvA(4)-RuvB(12)-RuvC(2) complex forms which resolves the HJ.

The protein localises to the cytoplasm. In terms of biological role, the RuvA-RuvB-RuvC complex processes Holliday junction (HJ) DNA during genetic recombination and DNA repair, while the RuvA-RuvB complex plays an important role in the rescue of blocked DNA replication forks via replication fork reversal (RFR). RuvA specifically binds to HJ cruciform DNA, conferring on it an open structure. The RuvB hexamer acts as an ATP-dependent pump, pulling dsDNA into and through the RuvAB complex. HJ branch migration allows RuvC to scan DNA until it finds its consensus sequence, where it cleaves and resolves the cruciform DNA. This Rickettsia peacockii (strain Rustic) protein is Holliday junction branch migration complex subunit RuvA.